Consider the following 1178-residue polypeptide: Integrin alpha-2 (1178 aa).

Residues 1 to 26 form the signal peptide; the sequence is MGPGQAGGALLLRLLMLVQGILNCLA. Residues 27 to 1129 lie on the Extracellular side of the membrane; that stretch reads YNVGLPGAKI…KPTEKAEVPT (1103 aa). FG-GAP repeat units lie at residues 31–89 and 98–158; these read LPGA…TATC and ASIS…FLTS. Cys-80 and Cys-89 are disulfide-bonded. 2 N-linked (GlcNAc...) asparagine glycosylation sites follow: Asn-102 and Asn-109. A VWFA domain is found at 185-362; sequence WEAVKNFLVK…TLGEQIFSIE (178 aa). FG-GAP repeat units lie at residues 363 to 417, 420 to 472, 474 to 536, 537 to 595, and 601 to 661; these read GTVQ…VIFP, AFDQ…KQGN, TVIQ…ILNQ, HQFL…TIRT, and ILGS…FTPD. 3 N-linked (GlcNAc...) asparagine glycosylation sites follow: Asn-429, Asn-457, and Asn-472. Positions 480 to 482 match the Cell attachment site motif; that stretch reads RGD. Residues Asp-496, Asp-498, Asp-500, Asp-504, Asp-560, Asn-562, Asp-564, Asp-568, Asp-624, Asn-626, Asp-628, and Asp-632 each contribute to the Ca(2+) site. 5 disulfides stabilise this stretch: Cys-677–Cys-734, Cys-786–Cys-792, Cys-862–Cys-873, Cys-1016–Cys-1047, and Cys-1052–Cys-1057. N-linked (GlcNAc...) asparagine glycosylation is present at Asn-696. N-linked (GlcNAc...) asparagine glycosylation is found at Asn-1054, Asn-1071, and Asn-1078. A helical membrane pass occupies residues 1130-1151; sequence GVIIGSIIAGILLLLAMTAGLW. Topologically, residues 1152–1178 are cytoplasmic; that stretch reads KLGFFKRQYKKMGQNPDEMDETTELNS. The short motif at 1154-1158 is the GFFKR motif element; the sequence is GFFKR.

It belongs to the integrin alpha chain family. In terms of assembly, heterodimer of an alpha and a beta subunit. Alpha-2 associates with beta-1. Interacts with HPS5 and RAB21.

Its subcellular location is the membrane. Integrin alpha-2/beta-1 is a collagen receptor, being responsible for adhesion of platelets and other cells to collagens, modulation of collagen and collagenase gene expression, force generation and organization of newly synthesized extracellular matrix. It is also a receptor for laminins, collagen C-propeptides and E-cadherin. Mice homozygous for a null mutation in the alpha-2 die very early in embryogenesis. This chain is Integrin alpha-2 (Itga2), found in Mus musculus (Mouse).